Consider the following 429-residue polypeptide: Nucleotide exchange factor Sil1 (429 aa).

A signal peptide spans 1 to 24 (MSGKQVVILLGSVLILGCLQVAAA). N-linked (GlcNAc...) asparagine glycosylation is present at asparagine 29. Residues 70–98 (DESERGTSLQSQPDDQNARESHDDNEPLA) are disordered. The segment covering 75–84 (GTSLQSQPDD) has biased composition (polar residues). The span at 85–94 (QNARESHDDN) shows a compositional bias: basic and acidic residues. The stretch at 104-135 (DIIEESIRRVKEQKKSYAELRKAYKEFQKNFR) forms a coiled coil. Residues asparagine 150, asparagine 199, and asparagine 400 are each glycosylated (N-linked (GlcNAc...) asparagine). A Prevents secretion from ER motif is present at residues 426–429 (HTEL).

This sequence belongs to the SIL1 family.

The protein localises to the endoplasmic reticulum lumen. Functionally, required for protein translocation and folding in the endoplasmic reticulum (ER). Functions as a nucleotide exchange factor for an ER lumenal chaperone of HSP70 family. The sequence is that of Nucleotide exchange factor Sil1 from Drosophila melanogaster (Fruit fly).